Consider the following 635-residue polypeptide: 1-deoxy-D-xylulose-5-phosphate synthase (635 aa).

Thiamine diphosphate contacts are provided by residues H74 and 115–117; that span reads AHS. D146 contacts Mg(2+). Residues 147–148, N176, Y283, and E365 contribute to the thiamine diphosphate site; that span reads GA. Residue N176 participates in Mg(2+) binding.

It belongs to the transketolase family. DXPS subfamily. Homodimer. Requires Mg(2+) as cofactor. It depends on thiamine diphosphate as a cofactor.

It carries out the reaction D-glyceraldehyde 3-phosphate + pyruvate + H(+) = 1-deoxy-D-xylulose 5-phosphate + CO2. It functions in the pathway metabolic intermediate biosynthesis; 1-deoxy-D-xylulose 5-phosphate biosynthesis; 1-deoxy-D-xylulose 5-phosphate from D-glyceraldehyde 3-phosphate and pyruvate: step 1/1. Catalyzes the acyloin condensation reaction between C atoms 2 and 3 of pyruvate and glyceraldehyde 3-phosphate to yield 1-deoxy-D-xylulose-5-phosphate (DXP). The chain is 1-deoxy-D-xylulose-5-phosphate synthase from Paraburkholderia xenovorans (strain LB400).